A 1176-amino-acid chain; its full sequence is Leucine--tRNA ligase, cytoplasmic (1176 aa).

2 residues coordinate L-leucine: Tyr-52 and Tyr-54. The short motif at 60-63 (HLGH) is the 'HIGH' region element. A Phosphoserine modification is found at Ser-167. Positions 260 to 509 (GPQEYTLLKL…DAGDALIYME (250 aa)) are editing domain. L-leucine contacts are provided by Leu-594 and Ser-597. The 'KMSKS' region motif lies at 716–720 (KMSKS). Lys-719 contributes to the ATP binding site. Ser-720 is modified (phosphoserine). N6-acetyllysine is present on residues Lys-970 and Lys-1047.

Belongs to the class-I aminoacyl-tRNA synthetase family. As to quaternary structure, part of the aminoacyl-tRNA synthetase multienzyme complex, also known as multisynthetase complex (MSC), that is composed of the aminoacyl-tRNA ligases for Arg (RARS1), Asp (DARS1), Gln (QARS1), Ile (IARS1), Leu (LARS1), Lys (KARS1), Met (MARS1) the bifunctional ligase for Glu and Pro (EPRS1) and the auxiliary subunits AIMP1/p43, AIMP2/p38 and EEF1E1/p18.

Its subcellular location is the cytoplasm. The enzyme catalyses tRNA(Leu) + L-leucine + ATP = L-leucyl-tRNA(Leu) + AMP + diphosphate. It catalyses the reaction L-methionyl-tRNA(Leu) + H2O = tRNA(Leu) + L-methionine + H(+). 5-fluoro-1,3-dihydro-1-hydroxy-1,2-benzoxaborole inhibits LARS1 by forming a covalent adduct with the 3' adenosine of tRNA(Leu) at the editing site, thus locking the enzyme in an inactive conformation. Functionally, aminoacyl-tRNA synthetase that catalyzes the specific attachment of leucine to its cognate tRNA (tRNA(Leu)). It performs tRNA aminoacylation in a two-step reaction: Leu is initially activated by ATP to form a leucyl-adenylate (Leu-AMP) intermediate; then the leucyl moiety is transferred to the acceptor 3' end of the tRNA to yield leucyl-tRNA. To improve the fidelity of catalytic reactions, it is also able to hydrolyze misactivated aminoacyl-adenylate intermediates (pre-transfer editing) and mischarged aminoacyl-tRNAs (post-transfer editing). This Homo sapiens (Human) protein is Leucine--tRNA ligase, cytoplasmic.